The primary structure comprises 594 residues: Metastasis-associated protein MTA3 (594 aa).

One can recognise a BAH domain in the interval 1-147 (MAANMYRVGD…PSLKTLLADK (147 aa)). Positions 148-259 (GEIRVGPRYQ…SAISVLVPLG (112 aa)) constitute an ELM2 domain. The SANT domain occupies 266–318 (DEMEEWSASEASLFEEALEKYGKDFNDIRQDFLPWKSLTSIIEYYYMWKTTDR). A GATA-type; atypical zinc finger spans residues 379-406 (CESCYATQSHQWYSWGPPNMQCRLCAIC). A phosphoserine mark is found at Ser428 and Ser430. Thr455 carries the post-translational modification Phosphothreonine. Phosphoserine is present on Ser519.

The protein belongs to the metastasis-associated protein family. Component of the nucleosome remodeling and deacetylase (NuRD) repressor complex, composed of core proteins MTA1, MTA2, MTA3, RBBP4, RBBP7, HDAC1, HDAC2, MBD2, MBD3, and peripherally associated proteins CDK2AP1, CDK2AP2, GATAD2A, GATAD2B, CHD3, CHD4 and CHD5. The exact stoichiometry of the NuRD complex is unknown, and some subunits such as MBD2 and MBD3, GATAD2A and GATAD2B, and CHD3, CHD4 and CHD5 define mutually exclusive NuRD complexes. Interacts with BCL6. Interacts with NACC2. Interacts with PWWP2B. As to expression, expressed in germinal centers of lymphoid tissues. No expression in nonepithelial cells.

It localises to the nucleus. The protein localises to the cytoplasm. Acts as a component of the histone deacetylase NuRD complex which participates in the remodeling of chromatin. Plays a role in maintenance of the normal epithelial architecture through the repression of SNAI1 transcription in a histone deacetylase-dependent manner, and thus the regulation of E-cadherin levels. Contributes to transcriptional repression by BCL6. The polypeptide is Metastasis-associated protein MTA3 (MTA3) (Homo sapiens (Human)).